The sequence spans 227 residues: MAYPFQLGLQDATSPIMEELTNFHDHTLMIVFLISSLVLYIISLMLTTKLTHTSTMDAQEVETIWTILPAVILILIALPSLRILYMMDEINNPALTVKTMGHQWYWSYEYTDYEDLCFDSYMIPTNDLKPGELRLLEVDNRVVLPMELPIRMLISSEDVLHSWAVPSLGLKTDAIPGRLNQATVTSNRPGLFYGQCSEICGSNHSFMPIVLEMVPLKHFENWSASMI.

Over 1 to 14 (MAYPFQLGLQDATS) the chain is Mitochondrial intermembrane. The chain crosses the membrane as a helical span at residues 15 to 45 (PIMEELTNFHDHTLMIVFLISSLVLYIISLM). The Mitochondrial matrix portion of the chain corresponds to 46-59 (LTTKLTHTSTMDAQ). Residues 60–87 (EVETIWTILPAVILILIALPSLRILYMM) form a helical membrane-spanning segment. The Mitochondrial intermembrane portion of the chain corresponds to 88–227 (DEINNPALTV…HFENWSASMI (140 aa)). Histidine 161, cysteine 196, glutamate 198, cysteine 200, histidine 204, and methionine 207 together coordinate Cu cation. Glutamate 198 is a Mg(2+) binding site.

This sequence belongs to the cytochrome c oxidase subunit 2 family. In terms of assembly, component of the cytochrome c oxidase (complex IV, CIV), a multisubunit enzyme composed of 14 subunits. The complex is composed of a catalytic core of 3 subunits MT-CO1, MT-CO2 and MT-CO3, encoded in the mitochondrial DNA, and 11 supernumerary subunits COX4I, COX5A, COX5B, COX6A, COX6B, COX6C, COX7A, COX7B, COX7C, COX8 and NDUFA4, which are encoded in the nuclear genome. The complex exists as a monomer or a dimer and forms supercomplexes (SCs) in the inner mitochondrial membrane with NADH-ubiquinone oxidoreductase (complex I, CI) and ubiquinol-cytochrome c oxidoreductase (cytochrome b-c1 complex, complex III, CIII), resulting in different assemblies (supercomplex SCI(1)III(2)IV(1) and megacomplex MCI(2)III(2)IV(2)). Found in a complex with TMEM177, COA6, COX18, COX20, SCO1 and SCO2. Interacts with TMEM177 in a COX20-dependent manner. Interacts with COX20. Interacts with COX16. The cofactor is Cu cation.

The protein localises to the mitochondrion inner membrane. The catalysed reaction is 4 Fe(II)-[cytochrome c] + O2 + 8 H(+)(in) = 4 Fe(III)-[cytochrome c] + 2 H2O + 4 H(+)(out). Its function is as follows. Component of the cytochrome c oxidase, the last enzyme in the mitochondrial electron transport chain which drives oxidative phosphorylation. The respiratory chain contains 3 multisubunit complexes succinate dehydrogenase (complex II, CII), ubiquinol-cytochrome c oxidoreductase (cytochrome b-c1 complex, complex III, CIII) and cytochrome c oxidase (complex IV, CIV), that cooperate to transfer electrons derived from NADH and succinate to molecular oxygen, creating an electrochemical gradient over the inner membrane that drives transmembrane transport and the ATP synthase. Cytochrome c oxidase is the component of the respiratory chain that catalyzes the reduction of oxygen to water. Electrons originating from reduced cytochrome c in the intermembrane space (IMS) are transferred via the dinuclear copper A center (CU(A)) of subunit 2 and heme A of subunit 1 to the active site in subunit 1, a binuclear center (BNC) formed by heme A3 and copper B (CU(B)). The BNC reduces molecular oxygen to 2 water molecules using 4 electrons from cytochrome c in the IMS and 4 protons from the mitochondrial matrix. The polypeptide is Cytochrome c oxidase subunit 2 (MT-CO2) (Berylmys bowersi (Bower's white-toothed rat)).